The sequence spans 410 residues: LL-diaminopimelate aminotransferase (410 aa).

The substrate site is built by Tyr-15 and Gly-42. Pyridoxal 5'-phosphate is bound by residues Tyr-72, 108–109, Tyr-132, Asn-187, Tyr-218, and 246–248; these read SK and SFS. Residues Lys-109, Tyr-132, and Asn-187 each coordinate substrate. Lys-249 carries the post-translational modification N6-(pyridoxal phosphate)lysine. Arg-257 and Asn-292 together coordinate pyridoxal 5'-phosphate. Residues Asn-292 and Arg-388 each contribute to the substrate site.

Belongs to the class-I pyridoxal-phosphate-dependent aminotransferase family. LL-diaminopimelate aminotransferase subfamily. As to quaternary structure, homodimer. Pyridoxal 5'-phosphate is required as a cofactor.

It catalyses the reaction (2S,6S)-2,6-diaminopimelate + 2-oxoglutarate = (S)-2,3,4,5-tetrahydrodipicolinate + L-glutamate + H2O + H(+). The protein operates within amino-acid biosynthesis; L-lysine biosynthesis via DAP pathway; LL-2,6-diaminopimelate from (S)-tetrahydrodipicolinate (aminotransferase route): step 1/1. Functionally, involved in the synthesis of meso-diaminopimelate (m-DAP or DL-DAP), required for both lysine and peptidoglycan biosynthesis. Catalyzes the direct conversion of tetrahydrodipicolinate to LL-diaminopimelate. The polypeptide is LL-diaminopimelate aminotransferase (Geotalea daltonii (strain DSM 22248 / JCM 15807 / FRC-32) (Geobacter daltonii)).